The chain runs to 154 residues: Myoglobin (154 aa).

One can recognise a Globin domain in the interval 2-148; sequence GLSDQEWQQV…FRNDMASKYK (147 aa). Position 65 (H65) interacts with nitrite. H65 contacts O2. H94 provides a ligand contact to heme b.

This sequence belongs to the globin family. Monomeric.

It localises to the cytoplasm. The protein localises to the sarcoplasm. The catalysed reaction is Fe(III)-heme b-[protein] + nitric oxide + H2O = Fe(II)-heme b-[protein] + nitrite + 2 H(+). It carries out the reaction H2O2 + AH2 = A + 2 H2O. Monomeric heme protein which primary function is to store oxygen and facilitate its diffusion within muscle tissues. Reversibly binds oxygen through a pentacoordinated heme iron and enables its timely and efficient release as needed during periods of heightened demand. Depending on the oxidative conditions of tissues and cells, and in addition to its ability to bind oxygen, it also has a nitrite reductase activity whereby it regulates the production of bioactive nitric oxide. Under stress conditions, like hypoxia and anoxia, it also protects cells against reactive oxygen species thanks to its pseudoperoxidase activity. This is Myoglobin (MB) from Cerorhinca monocerata (Rhinoceros auklet).